Here is a 211-residue protein sequence, read N- to C-terminus: uncharacterized protein (211 aa).

The next 6 membrane-spanning stretches (helical) occupy residues 21 to 38, 53 to 75, 82 to 104, 124 to 146, 159 to 178, and 188 to 210; these read WYVI…ASEI, WGMD…YAAV, TAYL…MGVA, IFYA…AANV, PLLI…YWVY, and AVSF…LMEW.

It is found in the cell membrane. This is an uncharacterized protein from Archaeoglobus fulgidus (strain ATCC 49558 / DSM 4304 / JCM 9628 / NBRC 100126 / VC-16).